The sequence spans 278 residues: Ras-related protein Rab-40B (278 aa).

GTP-binding residues include S23, G26, and K27. Positions 41–49 (SPYGHPAGI) are switch-I. D69 is a binding site for Mg(2+). GTP-binding residues include G72, N126, and R127. The segment at 72-88 (GQGRFCTIFRSYSRGAQ) is switch-II. Residues 175 to 228 (LLRHGMDRLWRPSKVLSLQDLCCRAVVSCTPVHLVDKLPLPIALRSHLKSFSMA) form the SOCS box domain. Positions 242–278 (SLTTSSTHKRSSLRKVKLVRPPQSPPKNCTRNSCKIS) are disordered. Over residues 248-259 (THKRSSLRKVKL) the composition is skewed to basic residues. Positions 267–278 (PKNCTRNSCKIS) are enriched in polar residues. Residue C270 is the site of S-palmitoyl cysteine attachment. Residue C275 is the site of S-geranylgeranyl cysteine attachment.

This sequence belongs to the small GTPase superfamily. Rab family. In terms of assembly, component of the cullin-5-RING E3 ubiquitin-protein ligase complex (ECS(RAB40B) complex) composed of CUL5, Elongin BC (ELOB and ELOC), RNF7/RBX2 and RAB40B; RAB40B interaction with ECS complex is GTP-independent. Binds (GTP-bound) LIMA1; interaction promotes LIMA1 subcellular localization in lamellipodia during cell migration. Interacts (GTP-bound) with TKS5/SH3PXD2A (via PX domain); interaction promotes invadopodia-mediated extracellular matrix degradation. Mg(2+) serves as cofactor.

Its subcellular location is the cell membrane. The protein resides in the cytoplasm. It localises to the cytosol. It is found in the cell projection. The protein localises to the lamellipodium membrane. Its subcellular location is the ruffle. It carries out the reaction GTP + H2O = GDP + phosphate + H(+). It participates in protein modification; protein ubiquitination. With respect to regulation, regulated by guanine nucleotide exchange factors (GEFs) which promote the exchange of bound GDP for free GTP. Regulated by GTPase activating proteins (GAPs) which increase the GTP hydrolysis activity. Inhibited by GDP dissociation inhibitors (GDIs). In terms of biological role, RAB40B small GTPase acts as substrate-recognition components of the ECS(RAB40B) E3 ubiquitin ligase complex which mediates the ubiquitination of target proteins. The Rab40 subfamily belongs to the Rab family that are key regulators of intracellular membrane trafficking, from the formation of transport vesicles to their fusion with membranes. Rabs cycle between an inactive GDP-bound form and an active GTP-bound form that is able to recruit to membranes different sets of downstream effectors directly responsible for vesicle formation, movement, tethering and fusion. As part of the ECS(RAB40B) complex, GTP-bound RAB40B promotes LIMA1/EPLIN ubiquitination and degradation, thereby regulating leading-edge actin dynamics during cell migration. As part of the ECS(RAB40B) complex, GTP-bound RAB40B also ubiquitinates RAP2A GTPase which promotes its localization to lamellipodia and activation to drive cell migration. The ECS(RAB40B) complex does not mediate canonical ubiquitin-dependent degradation of RAP2. RAB40B also binds TKS5/SH3PXD2A effector independently from ECS complex to promote invadopodia-mediated extracellular matrix degradation. The protein is Ras-related protein Rab-40B of Homo sapiens (Human).